Consider the following 721-residue polypeptide: Photosystem I P700 chlorophyll a apoprotein A1 (721 aa).

8 helical membrane-spanning segments follow: residues 61 to 84, 147 to 170, 186 to 210, 282 to 300, 337 to 360, 376 to 402, 424 to 446, and 522 to 540; these read VFSAHFGQLAIILIWLSGMYFHGA, LYCTAIGALIFAALMLFAGWFHYH, LNHHLAGLLGLGSLSWAGHQVHVSL, TAHHHLAIAILFLIAGHMY, WHAQLALNLAMLGSLTIVVAHHMY, LSLFTHHMWIRGFLIVGAAAHAAIFMV, AIVSHLNWACIFLGFHSFGLYIH, and FLVHHIHAFTIHVTVLILL. 2 residues coordinate [4Fe-4S] cluster: cysteine 564 and cysteine 573. A run of 2 helical transmembrane segments spans residues 580 to 601 and 655 to 677; these read HVFLGLFWMYNAISVVIFHFSW and LSAYGLFFLGAHFVWAFSLMFLF. Histidine 666 serves as a coordination point for chlorophyll a'. Chlorophyll a contacts are provided by methionine 674 and tyrosine 682. Tryptophan 683 serves as a coordination point for phylloquinone. The chain crosses the membrane as a helical span at residues 715 to 721; sequence AVGVAHY.

It belongs to the PsaA/PsaB family. The PsaA/B heterodimer binds the P700 chlorophyll special pair and subsequent electron acceptors. PSI consists of a core antenna complex that captures photons, and an electron transfer chain that converts photonic excitation into a charge separation. The eukaryotic PSI reaction center is composed of at least 11 subunits. The cofactor is P700 is a chlorophyll a/chlorophyll a' dimer, A0 is one or more chlorophyll a, A1 is one or both phylloquinones and FX is a shared 4Fe-4S iron-sulfur center..

The protein resides in the plastid. The protein localises to the chloroplast thylakoid membrane. It carries out the reaction reduced [plastocyanin] + hnu + oxidized [2Fe-2S]-[ferredoxin] = oxidized [plastocyanin] + reduced [2Fe-2S]-[ferredoxin]. In terms of biological role, psaA and PsaB bind P700, the primary electron donor of photosystem I (PSI), as well as the electron acceptors A0, A1 and FX. PSI is a plastocyanin-ferredoxin oxidoreductase, converting photonic excitation into a charge separation, which transfers an electron from the donor P700 chlorophyll pair to the spectroscopically characterized acceptors A0, A1, FX, FA and FB in turn. Oxidized P700 is reduced on the lumenal side of the thylakoid membrane by plastocyanin. The chain is Photosystem I P700 chlorophyll a apoprotein A1 from Ginkgo biloba (Ginkgo).